Here is a 317-residue protein sequence, read N- to C-terminus: Integrin-binding sialoprotein (317 aa).

The N-terminal stretch at M1–A16 is a signal peptide. Phosphoserine occurs at positions 31, 67, 74, 75, 94, and 100. The segment at F58–T254 is disordered. Residues S66–A102 show a composition bias toward acidic residues. A glycan (N-linked (GlcNAc...) asparagine) is linked at N104. O-linked (GalNAc...) threonine glycosylation is found at T119 and T122. S149 is modified (phosphoserine). Acidic residues predominate over residues S149–E173. N177, N182, and N190 each carry an N-linked (GlcNAc...) asparagine glycan. Positions K222–N232 are enriched in polar residues. T227, T228, T229, T238, and T239 each carry an O-linked (GalNAc...) threonine glycan. S280 carries the post-translational modification Phosphoserine. The Integrin-binding motif motif lies at R286–D288. 2 positions are modified to sulfotyrosine: Y313 and Y314.

Monomer. Interacts with integrins; the interaction promotes cell adhesion. Post-translationally, N-glycosylated; glycans consist of sialylated and core-fucosylated bi-, tri- and tetraantennary chains. In terms of processing, O-glycosylated at eight sites; mucin-type glycans contain Gal, GlcNAc, GalNAc and terminal NeuAc. Expressed in bone (at protein level). Expressed in trophoblast cells of placenta (at protein level). Expressed in brain.

Its subcellular location is the secreted. In terms of biological role, binds tightly to hydroxyapatite. Appears to form an integral part of the mineralized matrix. Probably important to cell-matrix interaction. Promotes adhesion and migration of various cells via the alpha-V/beta-3 integrin receptor (ITGAV:ITGB3). The sequence is that of Integrin-binding sialoprotein (IBSP) from Homo sapiens (Human).